Reading from the N-terminus, the 614-residue chain is Bifunctional 3'-phosphoadenosine 5'-phosphosulfate synthase 2 (614 aa).

Residues 1-215 (MSGIKKQKTE…VVELLQEQNI (215 aa)) are adenylyl-sulfate kinase. ATP is bound at residue 52–57 (GAGKTT). Adenosine 5'-phosphosulfate contacts are provided by residues 79–82 (DNVR), phenylalanine 91, 96–99 (REEN), 122–123 (IS), lysine 161, and 174–175 (GF). ATP-binding positions include serine 197, 409 to 412 (QLRN), 511 to 515 (GRDPA), and alanine 553. The segment at 224–614 (IHELFVPENK…TDYYRSLEKN (391 aa)) is sulfate adenylyltransferase.

This sequence in the N-terminal section; belongs to the APS kinase family. In the C-terminal section; belongs to the sulfate adenylyltransferase family. In terms of tissue distribution, expressed in cartilage and adrenal gland.

The enzyme catalyses sulfate + ATP + H(+) = adenosine 5'-phosphosulfate + diphosphate. It catalyses the reaction adenosine 5'-phosphosulfate + ATP = 3'-phosphoadenylyl sulfate + ADP + H(+). It participates in sulfur metabolism; sulfate assimilation. In terms of biological role, bifunctional enzyme with both ATP sulfurylase and APS kinase activity, which mediates two steps in the sulfate activation pathway. The first step is the transfer of a sulfate group to ATP to yield adenosine 5'-phosphosulfate (APS), and the second step is the transfer of a phosphate group from ATP to APS yielding 3'-phosphoadenylylsulfate/PAPS, the activated sulfate donor used by sulfotransferases. In mammals, PAPS is the sole source of sulfate while APS appears to only be an intermediate in the sulfate-activation pathway. Plays indirectly an important role in skeletogenesis during postnatal growth. This Homo sapiens (Human) protein is Bifunctional 3'-phosphoadenosine 5'-phosphosulfate synthase 2 (PAPSS2).